We begin with the raw amino-acid sequence, 287 residues long: MKRIMLFLATNLAVVLVLSVVLNIVYATTGMQPGSLSGLLVMAAVFGFGGALISLMMSKGMALRSVGGMVIESPRNETEHWLLETVGRQAQQAGIGMPTVAIYDSADINAFATGAKRDDSLVAVSTGLLHNMTRDEAEAVLAHEVSHIANGDMVTMTLMQGVVNTFVIFLSRFIANIVASNDDEEGQGTNMMVYFGVSMVLELVFGFLASFITMWYSRHREFHADAGAARLVGKEKMIAALERLKMSQESKLDGTMMAFGINGKQSLTELLMSHPPLDKRIAALRNQ.

2 helical membrane passes run 4–24 (IMLF…VLNI) and 36–56 (LSGL…ISLM). His143 contributes to the Zn(2+) binding site. Residue Glu144 is part of the active site. His147 contacts Zn(2+). 2 consecutive transmembrane segments (helical) span residues 158–178 (LMQG…ANIV) and 192–212 (MVYF…ASFI). A Zn(2+)-binding site is contributed by Glu221.

It belongs to the peptidase M48B family. It depends on Zn(2+) as a cofactor.

The protein localises to the cell inner membrane. This chain is Protease HtpX, found in Vibrio parahaemolyticus serotype O3:K6 (strain RIMD 2210633).